Consider the following 612-residue polypeptide: MIVDNSKDFDLKSFLANLTTHSGVYRMLDKHGEIIYVGKAKNLKNRVNSYFSKGAKDSKTLMMVEQIARIEITITPSDYEAYLLENNLIKQHRPKYNILFKDDKSYPYLVISRDKFPRVSFYRGKSAYKKGQCFGPYVSISSVKNTLNTIQKIFPIRQCENSYYKSRVRPCLQYQIKRCLAPCVGLVSQQQYDEQLAILKKFLAGKFSTVLEEISAKMYQASEDMEYEKAQVYRDQLVVLRKLQQQQIVDIQEDKTFDVIGIYMQDSYASIALLQIQNGDVVADRHWSIDAKGQDKTSIMHAFLSHFYLGDEIRNIWPKNIILSKVEFADITDLMNSISQKIGQAINWIIAPAADNLKWLKLAEVNARQKLNIYTSSKSQYQKRLESLKEFLELEKDIKRIECFDISHFQGEATIASCVVYTDEGEDRKSHRRYNIKDIKAGDDYAAIYQAVSRRVSSGLEADNLPDVMIIDGGKGQIHQAEAVFREFGIQDKVQLVSLGKGVERISGKEKIYKGFDDTEYTLDEHNPGFLLLRQVRDSAHDHAIKGQRKKVSANRQSSIIEEIEGVGPKRRKALIMYFGGWQELSRASVDEIAKVKGISKKLAQEIWECFH.

One can recognise a GIY-YIG domain in the interval 20 to 98 (THSGVYRMLD…IKQHRPKYNI (79 aa)). Positions 208 to 243 (STVLEEISAKMYQASEDMEYEKAQVYRDQLVVLRKL) constitute a UVR domain.

The protein belongs to the UvrC family. Interacts with UvrB in an incision complex.

It localises to the cytoplasm. Its function is as follows. The UvrABC repair system catalyzes the recognition and processing of DNA lesions. UvrC both incises the 5' and 3' sides of the lesion. The N-terminal half is responsible for the 3' incision and the C-terminal half is responsible for the 5' incision. The sequence is that of UvrABC system protein C from Francisella tularensis subsp. novicida (strain U112).